The chain runs to 382 residues: tRNA (guanine-N(7)-)-methyltransferase non-catalytic subunit wuho (382 aa).

The segment at 40–59 is disordered; sequence VKDTDAGNEPNGNQTQPTPA. Positions 49-59 are enriched in polar residues; the sequence is PNGNQTQPTPA. 2 WD repeats span residues 149 to 190 and 192 to 230; these read GHMS…ECFC and GHTE…ELSK.

Belongs to the WD repeat TRM82 family. Forms a heterodimer with the catalytic subunit.

The protein localises to the nucleus. The protein operates within tRNA modification; N(7)-methylguanine-tRNA biosynthesis. Functionally, required for the formation of N(7)-methylguanine at position 46 (m7G46) in tRNA. In the complex, it is required to stabilize and induce conformational changes of the catalytic subunit. This Anopheles gambiae (African malaria mosquito) protein is tRNA (guanine-N(7)-)-methyltransferase non-catalytic subunit wuho.